The following is a 200-amino-acid chain: Nucleoside triphosphate pyrophosphatase (200 aa).

The active-site Proton acceptor is D79.

The protein belongs to the Maf family. A divalent metal cation is required as a cofactor.

The protein localises to the cytoplasm. The catalysed reaction is a ribonucleoside 5'-triphosphate + H2O = a ribonucleoside 5'-phosphate + diphosphate + H(+). It catalyses the reaction a 2'-deoxyribonucleoside 5'-triphosphate + H2O = a 2'-deoxyribonucleoside 5'-phosphate + diphosphate + H(+). In terms of biological role, nucleoside triphosphate pyrophosphatase. May have a dual role in cell division arrest and in preventing the incorporation of modified nucleotides into cellular nucleic acids. The protein is Nucleoside triphosphate pyrophosphatase of Legionella pneumophila (strain Lens).